Here is a 728-residue protein sequence, read N- to C-terminus: 1,4-alpha-glucan branching enzyme GlgB (728 aa).

Catalysis depends on aspartate 409, which acts as the Nucleophile. Glutamate 462 (proton donor) is an active-site residue.

Belongs to the glycosyl hydrolase 13 family. GlgB subfamily. As to quaternary structure, monomer.

It catalyses the reaction Transfers a segment of a (1-&gt;4)-alpha-D-glucan chain to a primary hydroxy group in a similar glucan chain.. It functions in the pathway glycan biosynthesis; glycogen biosynthesis. Its function is as follows. Catalyzes the formation of the alpha-1,6-glucosidic linkages in glycogen by scission of a 1,4-alpha-linked oligosaccharide from growing alpha-1,4-glucan chains and the subsequent attachment of the oligosaccharide to the alpha-1,6 position. This Cereibacter sphaeroides (strain ATCC 17023 / DSM 158 / JCM 6121 / CCUG 31486 / LMG 2827 / NBRC 12203 / NCIMB 8253 / ATH 2.4.1.) (Rhodobacter sphaeroides) protein is 1,4-alpha-glucan branching enzyme GlgB.